The chain runs to 359 residues: Probable S-adenosylmethionine-dependent methyltransferase At5g38100 (359 aa).

Y19, C63, N68, D104, S133, and F134 together coordinate S-adenosyl-L-homocysteine. Residues N172, D258, and F260 each coordinate Mg(2+).

The protein belongs to the methyltransferase superfamily. Type-7 methyltransferase family. Homodimer. Requires Mg(2+) as cofactor.

The chain is Probable S-adenosylmethionine-dependent methyltransferase At5g38100 from Arabidopsis thaliana (Mouse-ear cress).